We begin with the raw amino-acid sequence, 344 residues long: Cytochrome c biogenesis protein CcsA (344 aa).

8 consecutive transmembrane segments (helical) span residues 21 to 41, 45 to 65, 80 to 100, 106 to 126, 151 to 171, 252 to 272, 287 to 307, and 313 to 333; these read NVAF…AAFP, LLSE…AALL, LYES…LALH, WVGV…ALAL, VMLL…AFLI, LIGL…VWAN, WALI…TKGW, and ALLA…VNFL.

The protein belongs to the CcmF/CycK/Ccl1/NrfE/CcsA family. As to quaternary structure, may interact with ccs1.

The protein resides in the cellular thylakoid membrane. Its function is as follows. Required during biogenesis of c-type cytochromes (cytochrome c6 and cytochrome f) at the step of heme attachment. This is Cytochrome c biogenesis protein CcsA from Synechococcus sp. (strain JA-3-3Ab) (Cyanobacteria bacterium Yellowstone A-Prime).